A 518-amino-acid polypeptide reads, in one-letter code: uncharacterized protein (518 aa).

2 ABC transporter domains span residues 4-260 (LSVK…QLEA) and 324-518 (LIFE…TKVL). ATP is bound by residues 36–43 (GANGEGKS) and 357–364 (GANGIGKT).

This sequence belongs to the ABC transporter superfamily.

This is an uncharacterized protein from Bacillus subtilis (strain 168).